Consider the following 363-residue polypeptide: Histidinol-phosphate aminotransferase (363 aa).

Lysine 215 carries the N6-(pyridoxal phosphate)lysine modification.

The protein belongs to the class-II pyridoxal-phosphate-dependent aminotransferase family. Histidinol-phosphate aminotransferase subfamily. Homodimer. Pyridoxal 5'-phosphate serves as cofactor.

It carries out the reaction L-histidinol phosphate + 2-oxoglutarate = 3-(imidazol-4-yl)-2-oxopropyl phosphate + L-glutamate. The protein operates within amino-acid biosynthesis; L-histidine biosynthesis; L-histidine from 5-phospho-alpha-D-ribose 1-diphosphate: step 7/9. The protein is Histidinol-phosphate aminotransferase of Buchnera aphidicola subsp. Diuraphis noxia.